We begin with the raw amino-acid sequence, 417 residues long: MITMDTIRKALVCFSILSILVLACGCVNTPEKIDININSNTNNGENTEKPINQENQNVNNVENKKESQSTQNIQSYENKEIKNQENHPLQSNQNYEQTNGNFNEENENAMTNVGESEVNYNNEPAYNYYIEITYPDGTIPDKIEEQMLYYIKVIDPIVGGLAGIDIYVDGNYIGTLDDVYGIVECVFYEPGYHTITAEDNGKILASKTVYVEEGTAYNSGESENYDEYDNNYESNDLQQTQTQFSEIEVYVDDIKPSNSIIITKLAMNPGFLASINGISPDIGVNIEMENGEKINLKYVSMDVDLIIDNPNSESITIDKIILNMFDDEGHSLGRGEVSNIVITPGENPVTVKVNIPINKMGYEILRKLSGEEVFAEISGSAYIEGSGEVPFSGEADLLPPLPTPPFPLPPLPPFPTE.

A helical membrane pass occupies residues 10-30 (ALVCFSILSILVLACGCVNTP). The tract at residues 84–106 (QENHPLQSNQNYEQTNGNFNEEN) is disordered. Positions 86–106 (NHPLQSNQNYEQTNGNFNEEN) are enriched in polar residues. Residues 148-168 (LYYIKVIDPIVGGLAGIDIYV) traverse the membrane as a helical segment.

It localises to the cell membrane. This is an uncharacterized protein from Methanocaldococcus jannaschii (strain ATCC 43067 / DSM 2661 / JAL-1 / JCM 10045 / NBRC 100440) (Methanococcus jannaschii).